Consider the following 430-residue polypeptide: T-kininogen 2 (430 aa).

Positions 1–18 are cleaved as a signal peptide; sequence MKLITILLLCSRLLPSLA. Gln19 carries the post-translational modification Pyrrolidone carboxylic acid. The region spanning 28–131 is the Cystatin kininogen-type 1 domain; that stretch reads CNDETVFQAV…TQICNITPGK (104 aa). Disulfide bonds link Cys28/Cys404, Cys83/Cys94, Cys107/Cys125, Cys141/Cys144, Cys205/Cys217, Cys228/Cys247, Cys263/Cys266, Cys327/Cys339, and Cys350/Cys369. Asn82 is a glycosylation site (N-linked (GlcNAc...) asparagine). Residues 150–253 enclose the Cystatin kininogen-type 2 domain; the sequence is MDSSDLKPVL…SQSCDLYPGD (104 aa). Asn168 and Asn204 each carry an N-linked (GlcNAc...) asparagine glycan. The Cystatin kininogen-type 3 domain occupies 272 to 375; that stretch reads VDSPELKEAL…TVRCQALDMM (104 aa). Residue Asn326 is glycosylated (N-linked (GlcNAc...) asparagine). Positions 410-430 are disordered; that stretch reads LSKAGAGPAPDHQAEASTVTP.

Post-translationally, as T-kinin is preceded by a Met instead of an Arg or Lys, it is not released from its precursor by either tissue or plasma kallikrein. Plasma.

Its subcellular location is the secreted. It localises to the extracellular space. Its function is as follows. Kininogens are plasma glycoproteins with a number of functions: (1) as precursor of the active peptide bradykinin they effect smooth muscle contraction, induction of hypotension and increase of vascular permeability. (2) They play a role in blood coagulation by helping to position optimally prekallikrein and factor XI next to factor XII. (3) They are inhibitor of thiol proteases. The sequence is that of T-kininogen 2 from Rattus norvegicus (Rat).